Consider the following 375-residue polypeptide: Chaperone protein DnaJ (375 aa).

A J domain is found at 5-69 (DYYEILGVSK…QKRAAYDQYG (65 aa)). The CR-type zinc-finger motif lies at 130-208 (GVTKEIRIPT…CHGHGRVEKA (79 aa)). The Zn(2+) site is built by cysteine 143, cysteine 146, cysteine 160, cysteine 163, cysteine 182, cysteine 185, cysteine 196, and cysteine 199. CXXCXGXG motif repeat units follow at residues 143-150 (CGVCHGSG), 160-167 (CPTCHGQG), 182-189 (CPHCHGRG), and 196-203 (CNSCHGHG).

Belongs to the DnaJ family. As to quaternary structure, homodimer. Zn(2+) serves as cofactor.

Its subcellular location is the cytoplasm. Its function is as follows. Participates actively in the response to hyperosmotic and heat shock by preventing the aggregation of stress-denatured proteins and by disaggregating proteins, also in an autonomous, DnaK-independent fashion. Unfolded proteins bind initially to DnaJ; upon interaction with the DnaJ-bound protein, DnaK hydrolyzes its bound ATP, resulting in the formation of a stable complex. GrpE releases ADP from DnaK; ATP binding to DnaK triggers the release of the substrate protein, thus completing the reaction cycle. Several rounds of ATP-dependent interactions between DnaJ, DnaK and GrpE are required for fully efficient folding. Also involved, together with DnaK and GrpE, in the DNA replication of plasmids through activation of initiation proteins. The chain is Chaperone protein DnaJ from Serratia proteamaculans (strain 568).